The primary structure comprises 120 residues: Large ribosomal subunit protein bL19 (120 aa).

It belongs to the bacterial ribosomal protein bL19 family.

In terms of biological role, this protein is located at the 30S-50S ribosomal subunit interface and may play a role in the structure and function of the aminoacyl-tRNA binding site. The chain is Large ribosomal subunit protein bL19 from Chlorobium limicola (strain DSM 245 / NBRC 103803 / 6330).